A 137-amino-acid chain; its full sequence is Nucleoside diphosphate kinase (137 aa).

Residues K9, F57, R85, T91, R102, and N112 each contribute to the ATP site. Residue H115 is the Pros-phosphohistidine intermediate of the active site.

It belongs to the NDK family. In terms of assembly, homotetramer. Requires Mg(2+) as cofactor.

The protein resides in the cytoplasm. It catalyses the reaction a 2'-deoxyribonucleoside 5'-diphosphate + ATP = a 2'-deoxyribonucleoside 5'-triphosphate + ADP. The catalysed reaction is a ribonucleoside 5'-diphosphate + ATP = a ribonucleoside 5'-triphosphate + ADP. Its function is as follows. Major role in the synthesis of nucleoside triphosphates other than ATP. The ATP gamma phosphate is transferred to the NDP beta phosphate via a ping-pong mechanism, using a phosphorylated active-site intermediate. The protein is Nucleoside diphosphate kinase of Sulfurimonas denitrificans (strain ATCC 33889 / DSM 1251) (Thiomicrospira denitrificans (strain ATCC 33889 / DSM 1251)).